The following is a 69-amino-acid chain: Atypical cationic antimicrobial peptide (69 aa).

Residues 1–22 (MAFLKKSLFLVLFLGLVSLSIC) form the signal peptide. Positions 23 to 45 (DEEKRENEDEENQEDDEQSEMRR) are excised as a propeptide. Residues 25–45 (EKRENEDEENQEDDEQSEMRR) form a disordered region. The span at 30-40 (EDEENQEDDEQ) shows a compositional bias: acidic residues.

It belongs to the frog skin active peptide (FSAP) family. Monomer and/or weakly self-associated, oligomer, and amyloid-like fibril. Can adopt a monomeric nonamphipathic alpha-helical conformation, possibly with the aid of its cationic N- and C-termini, when bound to anionic membranes. Forms stable and ordered beta-sheet aggregates in aqueous environment or when bound to anionic or zwitterionic phospholipid vesicles. In terms of tissue distribution, expressed by the skin glands.

Its subcellular location is the secreted. It is found in the target cell membrane. Its function is as follows. Atypical cationic antimicrobial peptide with potent activity against Gram-negative and Gram-positive bacteria. Acts by inducing permeabilization of bacterial membrane. In vitro, also shows chemoattractant activity, which is mediated through a G protein-coupled receptor (probably FPR2 coupled to the ERK1/2 MAPK kinase pathway). Has slow-kinetic self-association and amyloid-like properties that modulate its activity. The soluble, weakly self-associated forms act on leukocytes to promote chemotaxis but have low antibacterial activity, the oligomers exhibit potent antimicrobial activity, whereas the amyloid-like fibrils have a very weak antibacterial activity. The membrane composition has a great influence on the peptide behavior. The peptide induces membrane leakage and insertion to a lesser extent in model membranes of the anionic lipid phosphatidylglycerol (PG) than in the model membranes of the zwitterionic lipid phosphatidylcholine (PC) vesicles. It forms more fibrils in PC than in PG. Membrane perturbations are more observed in the presence of PG than in the presence of PC. The peptide shows low hemolytic activity. In Phyllomedusa sauvagei (Sauvage's leaf frog), this protein is Atypical cationic antimicrobial peptide.